We begin with the raw amino-acid sequence, 488 residues long: Glutamyl-tRNA(Gln) amidotransferase subunit A (488 aa).

Active-site charge relay system residues include Lys77 and Ser152. Residue Ser176 is the Acyl-ester intermediate of the active site.

Belongs to the amidase family. GatA subfamily. Heterotrimer of A, B and C subunits.

The catalysed reaction is L-glutamyl-tRNA(Gln) + L-glutamine + ATP + H2O = L-glutaminyl-tRNA(Gln) + L-glutamate + ADP + phosphate + H(+). Its function is as follows. Allows the formation of correctly charged Gln-tRNA(Gln) through the transamidation of misacylated Glu-tRNA(Gln) in organisms which lack glutaminyl-tRNA synthetase. The reaction takes place in the presence of glutamine and ATP through an activated gamma-phospho-Glu-tRNA(Gln). The sequence is that of Glutamyl-tRNA(Gln) amidotransferase subunit A from Streptococcus gordonii (strain Challis / ATCC 35105 / BCRC 15272 / CH1 / DL1 / V288).